Here is a 288-residue protein sequence, read N- to C-terminus: 2-hydroxy-6-oxononadienedioate/2-hydroxy-6-oxononatrienedioate hydrolase (288 aa).

The Proton acceptor role is filled by His267.

Belongs to the AB hydrolase superfamily. MhpC family. As to quaternary structure, homodimer.

It carries out the reaction (2Z,4E)-2-hydroxy-6-oxonona-2,4-dienedioate + H2O = (2Z)-2-hydroxypenta-2,4-dienoate + succinate + H(+). It catalyses the reaction (2Z,4E,7E)-2-hydroxy-6-oxonona-2,4,7-trienedioate + H2O = (2Z)-2-hydroxypenta-2,4-dienoate + fumarate + H(+). Its pathway is aromatic compound metabolism; 3-phenylpropanoate degradation. In terms of biological role, catalyzes the cleavage of the C5-C6 bond of 2-hydroxy-6-oxononadienedioate and 2-hydroxy-6-oxononatrienedioate, a dienol ring fission product of the bacterial meta-cleavage pathway for degradation of phenylpropionic acid. The protein is 2-hydroxy-6-oxononadienedioate/2-hydroxy-6-oxononatrienedioate hydrolase of Klebsiella pneumoniae subsp. pneumoniae (strain ATCC 700721 / MGH 78578).